A 392-amino-acid polypeptide reads, in one-letter code: Integrin-linked kinase-associated serine/threonine phosphatase 2C (392 aa).

An N-acetylmethionine modification is found at Met-1. The tract at residues 1 to 91 is disordered; sequence MDLFGDLPEP…PEEEKNGGEE (91 aa). The span at 31-40 shows a compositional bias: low complexity; it reads DLPPTSSTDS. Over residues 59–70 the composition is skewed to polar residues; that stretch reads SGSLATSGSQVV. Basic and acidic residues predominate over residues 72–91; sequence NEGKGAKRKAPEEEKNGGEE. The 283-residue stretch at 108-390 folds into the PPM-type phosphatase domain; that stretch reads KGYVAERKGE…DNVTVMVVRI (283 aa). Asp-152 and Gly-153 together coordinate Mn(2+). The residue at position 210 (Lys-210) is an N6-acetyllysine. Mn(2+) is bound by residues Asp-326 and Asp-381.

This sequence belongs to the PP2C family. Interacts with ILK. It depends on Mg(2+) as a cofactor. Requires Mn(2+) as cofactor. As to expression, widely expressed. Highest expression observed in kidney, liver and muscle.

The protein resides in the cytoplasm. It catalyses the reaction O-phospho-L-seryl-[protein] + H2O = L-seryl-[protein] + phosphate. The enzyme catalyses O-phospho-L-threonyl-[protein] + H2O = L-threonyl-[protein] + phosphate. Protein phosphatase that may play a role in regulation of cell cycle progression via dephosphorylation of its substrates whose appropriate phosphorylation states might be crucial for cell proliferation. Selectively associates with integrin linked kinase (ILK), to modulate cell adhesion and growth factor signaling. Inhibits the ILK-GSK3B signaling axis and may play an important role in inhibiting oncogenic transformation. In Rattus norvegicus (Rat), this protein is Integrin-linked kinase-associated serine/threonine phosphatase 2C (Ilkap).